Consider the following 863-residue polypeptide: Nitrate reductase [NADH] (863 aa).

Residue cysteine 137 coordinates Mo-molybdopterin. The Cytochrome b5 heme-binding domain occupies lysine 484 to alanine 559. The heme site is built by histidine 519 and histidine 542. The FAD-binding FR-type domain maps to lysine 602 to aspartate 719. Residues arginine 659–threonine 662, valine 676–tyrosine 680, phenylalanine 688, lysine 693–serine 695, and threonine 746 contribute to the FAD site.

The protein belongs to the nitrate reductase family. As to quaternary structure, homodimer. FAD is required as a cofactor. It depends on Mo-molybdopterin as a cofactor. The cofactor is heme.

The enzyme catalyses nitrite + NAD(+) + H2O = nitrate + NADH + H(+). Its function is as follows. Nitrate reductase is a key enzyme involved in the first step of nitrate assimilation in plants, fungi and bacteria. The sequence is that of Nitrate reductase [NADH] from Ulva prolifera (Green seaweed).